The sequence spans 697 residues: Phosphoribosylformylglycinamidine synthase subunit PurL (697 aa).

The active site involves H34. The ATP site is built by Y37 and K76. Residue E78 participates in Mg(2+) binding. Residues 79–82 (SHNH) and R101 each bind substrate. The active-site Proton acceptor is the H80. Position 102 (D102) interacts with Mg(2+). Substrate is bound at residue Q224. D250 lines the Mg(2+) pocket. A substrate-binding site is contributed by 294 to 296 (ETQ). 2 residues coordinate ATP: D472 and G509. A substrate-binding site is contributed by S512.

Belongs to the FGAMS family. Monomer. Part of the FGAM synthase complex composed of 1 PurL, 1 PurQ and 2 PurS subunits.

It localises to the cytoplasm. The catalysed reaction is N(2)-formyl-N(1)-(5-phospho-beta-D-ribosyl)glycinamide + L-glutamine + ATP + H2O = 2-formamido-N(1)-(5-O-phospho-beta-D-ribosyl)acetamidine + L-glutamate + ADP + phosphate + H(+). It participates in purine metabolism; IMP biosynthesis via de novo pathway; 5-amino-1-(5-phospho-D-ribosyl)imidazole from N(2)-formyl-N(1)-(5-phospho-D-ribosyl)glycinamide: step 1/2. In terms of biological role, part of the phosphoribosylformylglycinamidine synthase complex involved in the purines biosynthetic pathway. Catalyzes the ATP-dependent conversion of formylglycinamide ribonucleotide (FGAR) and glutamine to yield formylglycinamidine ribonucleotide (FGAM) and glutamate. The FGAM synthase complex is composed of three subunits. PurQ produces an ammonia molecule by converting glutamine to glutamate. PurL transfers the ammonia molecule to FGAR to form FGAM in an ATP-dependent manner. PurS interacts with PurQ and PurL and is thought to assist in the transfer of the ammonia molecule from PurQ to PurL. This Pyrobaculum aerophilum (strain ATCC 51768 / DSM 7523 / JCM 9630 / CIP 104966 / NBRC 100827 / IM2) protein is Phosphoribosylformylglycinamidine synthase subunit PurL.